A 40-amino-acid polypeptide reads, in one-letter code: Photosystem II reaction center protein J (40 aa).

Residues 8-28 (IPLWIIGTVAGILVIGLVGVF) form a helical membrane-spanning segment.

The protein belongs to the PsbJ family. PSII is composed of 1 copy each of membrane proteins PsbA, PsbB, PsbC, PsbD, PsbE, PsbF, PsbH, PsbI, PsbJ, PsbK, PsbL, PsbM, PsbT, PsbX, PsbY, PsbZ, Psb30/Ycf12, at least 3 peripheral proteins of the oxygen-evolving complex and a large number of cofactors. It forms dimeric complexes.

It is found in the plastid. It localises to the chloroplast thylakoid membrane. Its function is as follows. One of the components of the core complex of photosystem II (PSII). PSII is a light-driven water:plastoquinone oxidoreductase that uses light energy to abstract electrons from H(2)O, generating O(2) and a proton gradient subsequently used for ATP formation. It consists of a core antenna complex that captures photons, and an electron transfer chain that converts photonic excitation into a charge separation. The polypeptide is Photosystem II reaction center protein J (Helianthus annuus (Common sunflower)).